Here is a 380-residue protein sequence, read N- to C-terminus: Tubulin alpha chain (380 aa).

Glu-46, Ser-115, Gly-119, Thr-120, Thr-154, Asn-181, and Asn-202 together coordinate GTP. Glu-46 serves as a coordination point for Mg(2+). Residue Glu-228 is part of the active site.

This sequence belongs to the tubulin family. In terms of assembly, dimer of alpha and beta chains. A typical microtubule is a hollow water-filled tube with an outer diameter of 25 nm and an inner diameter of 15 nM. Alpha-beta heterodimers associate head-to-tail to form protofilaments running lengthwise along the microtubule wall with the beta-tubulin subunit facing the microtubule plus end conferring a structural polarity. Microtubules usually have 13 protofilaments but different protofilament numbers can be found in some organisms and specialized cells. The cofactor is Mg(2+).

The protein localises to the cytoplasm. The protein resides in the cytoskeleton. The enzyme catalyses GTP + H2O = GDP + phosphate + H(+). Its function is as follows. Tubulin is the major constituent of microtubules, a cylinder consisting of laterally associated linear protofilaments composed of alpha- and beta-tubulin heterodimers. Microtubules grow by the addition of GTP-tubulin dimers to the microtubule end, where a stabilizing cap forms. Below the cap, tubulin dimers are in GDP-bound state, owing to GTPase activity of alpha-tubulin. The sequence is that of Tubulin alpha chain (TUB1) from Encephalitozoon hellem (Microsporidian parasite).